A 433-amino-acid polypeptide reads, in one-letter code: Inward rectifier potassium channel 18 (433 aa).

The Cytoplasmic portion of the chain corresponds to 1–77 (MTAASRANPY…LADMFTTCVD (77 aa)). Residues 78 to 104 (IRWRYMLLIFSLAFLASWLLFGVIFWV) form a helical membrane-spanning segment. Topologically, residues 105 to 129 (IAVAHGDLEPAEGHGRTPCVMQVHG) are extracellular. The helical; Pore-forming intramembrane region spans 130-146 (FMAAFLFSIETQTTIGY). The short motif at 143 to 148 (TIGYGL) is the Selectivity filter element. Residues 147–155 (GLRCVTEEC) are Extracellular-facing. Residues 156-183 (LVAVFMVVAQSIVGCIIDSFMIGAIMAK) form a helical membrane-spanning segment. Over 184–433 (MARPKKRAQT…QRPYRRGSEI (250 aa)) the chain is Cytoplasmic. Residues 387–433 (DEEDEADGDQDGRSRDGLSPQARHDFDRLQAGGGVLEQRPYRRGSEI) are disordered. Positions 396-414 (QDGRSRDGLSPQARHDFDR) are enriched in basic and acidic residues.

The protein belongs to the inward rectifier-type potassium channel (TC 1.A.2.1) family. KCNJ12 subfamily. Can form heteromeric channels with Kir2.1/KCNJ2. Can form heteromeric channels with Kir2.2/KCNJ12. Post-translationally, probably phosphorylated by PKC; decreases single-channel open probability. Specifically expressed in skeletal muscle.

The protein resides in the cell membrane. Its subcellular location is the endoplasmic reticulum. The catalysed reaction is K(+)(in) = K(+)(out). Functionally, inward rectifier potassium channels are characterized by a greater tendency to allow potassium to flow into the cell rather than out of it. Their voltage dependence is regulated by the concentration of extracellular potassium; as external potassium is raised, the voltage range of the channel opening shifts to more positive voltages. The inward rectification is mainly due to the blockage of outward current by internal magnesium. In Homo sapiens (Human), this protein is Inward rectifier potassium channel 18 (KCNJ18).